A 745-amino-acid polypeptide reads, in one-letter code: Jacalin-related lectin 4 (745 aa).

Jacalin-type lectin domains are found at residues 2-148, 151-294, 307-448, 451-594, and 601-744; these read AQKL…YFAP, PTKF…YFSP, AEKL…YFVT, PTKF…YFSR, and AETL…YVMP.

It belongs to the jacalin lectin family.

The sequence is that of Jacalin-related lectin 4 (JAL4) from Arabidopsis thaliana (Mouse-ear cress).